We begin with the raw amino-acid sequence, 422 residues long: L-2-hydroxyglutarate dehydrogenase (422 aa).

It belongs to the L2HGDH family. FAD is required as a cofactor.

It is found in the cell inner membrane. It catalyses the reaction (S)-2-hydroxyglutarate + a quinone = a quinol + 2-oxoglutarate. The protein operates within amino-acid degradation. Catalyzes the dehydrogenation of L-2-hydroxyglutarate (L2HG) to alpha-ketoglutarate and couples to the respiratory chain by feeding electrons from the reaction into the membrane quinone pool. Functions in a L-lysine degradation pathway that proceeds via cadaverine, glutarate and L-2-hydroxyglutarate. Also displays some oxidase activity in vitro on L-2-hydroxyglutarate with O2 as the electron acceptor, but this activity is most likely not physiological. The chain is L-2-hydroxyglutarate dehydrogenase from Escherichia coli O17:K52:H18 (strain UMN026 / ExPEC).